The following is a 259-amino-acid chain: Ubiquinone/menaquinone biosynthesis C-methyltransferase UbiE (259 aa).

Residues T82, D103, 131–132, and S148 each bind S-adenosyl-L-methionine; that span reads NA.

This sequence belongs to the class I-like SAM-binding methyltransferase superfamily. MenG/UbiE family.

It carries out the reaction a 2-demethylmenaquinol + S-adenosyl-L-methionine = a menaquinol + S-adenosyl-L-homocysteine + H(+). The catalysed reaction is a 2-methoxy-6-(all-trans-polyprenyl)benzene-1,4-diol + S-adenosyl-L-methionine = a 5-methoxy-2-methyl-3-(all-trans-polyprenyl)benzene-1,4-diol + S-adenosyl-L-homocysteine + H(+). Its pathway is quinol/quinone metabolism; menaquinone biosynthesis; menaquinol from 1,4-dihydroxy-2-naphthoate: step 2/2. It participates in cofactor biosynthesis; ubiquinone biosynthesis. In terms of biological role, methyltransferase required for the conversion of demethylmenaquinol (DMKH2) to menaquinol (MKH2) and the conversion of 2-polyprenyl-6-methoxy-1,4-benzoquinol (DDMQH2) to 2-polyprenyl-3-methyl-6-methoxy-1,4-benzoquinol (DMQH2). In Vibrio campbellii (strain ATCC BAA-1116), this protein is Ubiquinone/menaquinone biosynthesis C-methyltransferase UbiE.